Here is a 153-residue protein sequence, read N- to C-terminus: MIDYRDRHILSLLQANAEMPLAEIAERVALSVSACSRRVARLREEGYIKGTIALLDRKKINLPTTIFLLVKTGLHTGNYLEQFHAAVSAIPEIVEVHRLTGNFDYILKLALPNVEYYDVIYKQILKHVAFYDMSAYISMETVKISPALPTNYI.

The region spanning 2–63 (IDYRDRHILS…LLDRKKINLP (62 aa)) is the HTH asnC-type domain. The H-T-H motif DNA-binding region spans 21-40 (LAEIAERVALSVSACSRRVA).

This is HTH-type transcriptional regulator Zrp (zrp) from Zymomonas mobilis subsp. mobilis (strain ATCC 10988 / DSM 424 / LMG 404 / NCIMB 8938 / NRRL B-806 / ZM1).